The following is an 881-amino-acid chain: Nitrate reductase [NADH] 1 (881 aa).

Positions 1–46 (MAASVEHRPFTSHQHGVVRSFKSYPDVPRPKKLPLPQPLSDSTNDN) are disordered. Cys-167 contacts Mo-molybdopterin. The Cytochrome b5 heme-binding domain occupies 515 to 590 (TKSYSLSEVR…LEDYRIGELM (76 aa)). Positions 550 and 573 each coordinate heme. The FAD-binding FR-type domain occupies 625–737 (REKIPCKLLS…KGPLGHIEYT (113 aa)). FAD is bound by residues 677–680 (RAYT), 694–698 (VVKVY), Phe-699, Phe-706, 711–713 (IMS), and Thr-764.

This sequence belongs to the nitrate reductase family. As to quaternary structure, homodimer. Requires FAD as cofactor. It depends on heme as a cofactor. Mo-molybdopterin is required as a cofactor.

It carries out the reaction nitrite + NAD(+) + H2O = nitrate + NADH + H(+). Its function is as follows. Nitrate reductase is a key enzyme involved in the first step of nitrate assimilation in plants, fungi and bacteria. This is Nitrate reductase [NADH] 1 (NIA1) from Phaseolus vulgaris (Kidney bean).